The following is a 242-amino-acid chain: Segregation and condensation protein A (242 aa).

Belongs to the ScpA family. As to quaternary structure, component of a cohesin-like complex composed of ScpA, ScpB and the Smc homodimer, in which ScpA and ScpB bind to the head domain of Smc. The presence of the three proteins is required for the association of the complex with DNA.

The protein localises to the cytoplasm. Participates in chromosomal partition during cell division. May act via the formation of a condensin-like complex containing Smc and ScpB that pull DNA away from mid-cell into both cell halves. This is Segregation and condensation protein A from Lactococcus lactis subsp. cremoris (strain MG1363).